The following is a 205-amino-acid chain: Protease (205 aa).

Active-site residues include His55, Asp72, and Cys122.

It belongs to the peptidase C5 family. Interacts with protease cofactor pVI-C; this interaction is necessary for protease activation.

The protein localises to the virion. It localises to the host nucleus. It catalyses the reaction Cleaves proteins of the adenovirus and its host cell at two consensus sites: -Yaa-Xaa-Gly-Gly-|-Xaa- and -Yaa-Xaa-Gly-Xaa-|-Gly- (in which Yaa is Met, Ile or Leu, and Xaa is any amino acid).. Its activity is regulated as follows. Requires DNA and protease cofactor for maximal activation. Inside nascent virions, becomes partially activated by binding to the viral DNA, allowing it to cleave the cofactor that binds to the protease and fully activates it. Actin, like the viral protease cofactor, seems to act as a cofactor in the cleavage of cytokeratin 18 and of actin itself. In terms of biological role, cleaves viral precursor proteins (pTP, pIIIa, pVI, pVII, pVIII, and pX) inside newly assembled particles giving rise to mature virions. Protease complexed to its cofactor slides along the viral DNA to specifically locate and cleave the viral precursors. Mature virions have a weakened organization compared to the unmature virions, thereby facilitating subsequent uncoating. Without maturation, the particle lacks infectivity and is unable to uncoat. Late in adenovirus infection, in the cytoplasm, may participate in the cytoskeleton destruction. Cleaves host cell cytoskeletal keratins K7 and K18. The chain is Protease from Galliformes (FAdV-8).